A 911-amino-acid polypeptide reads, in one-letter code: Nitrate reductase [NADH], clone PBNBR1405 (911 aa).

A disordered region spans residues 1–68; sequence MATSVDNRHY…RFDSSDDEDE (68 aa). Over residues 49 to 62 the composition is skewed to basic and acidic residues; sequence KSVDKTTKEDRFDS. Cys191 contacts Mo-molybdopterin. In terms of domain architecture, Cytochrome b5 heme-binding spans 539 to 614; sequence SKMYSMSEVR…LEDYRIGELI (76 aa). Residues His574 and His597 each coordinate heme. Residues 654–766 enclose the FAD-binding FR-type domain; the sequence is REKVPVKLIE…KGPLGHIEYQ (113 aa). Residues 706–709, 723–727, Phe728, Phe735, 740–742, and Thr793 contribute to the FAD site; these read RAYT, VIKVY, and LMS.

The protein belongs to the nitrate reductase family. Homodimer. It depends on FAD as a cofactor. The cofactor is heme. Requires Mo-molybdopterin as cofactor.

It carries out the reaction nitrite + NAD(+) + H2O = nitrate + NADH + H(+). In terms of biological role, nitrate reductase is a key enzyme involved in the first step of nitrate assimilation in plants, fungi and bacteria. In Brassica napus (Rape), this protein is Nitrate reductase [NADH], clone PBNBR1405 (NIA1).